Reading from the N-terminus, the 894-residue chain is Alanine--tRNA ligase (894 aa).

The protein belongs to the class-II aminoacyl-tRNA synthetase family.

Its subcellular location is the cytoplasm. The enzyme catalyses tRNA(Ala) + L-alanine + ATP = L-alanyl-tRNA(Ala) + AMP + diphosphate. Catalyzes the attachment of alanine to tRNA(Ala) in a two-step reaction: alanine is first activated by ATP to form Ala-AMP and then transferred to the acceptor end of tRNA(Ala). Also edits incorrectly charged Ser-tRNA(Ala) and Gly-tRNA(Ala) via its editing domain. The chain is Alanine--tRNA ligase (alaS) from Leuconostoc citreum (strain KM20).